Reading from the N-terminus, the 478-residue chain is MAEEYAECLLEKNFHEDCSGCKVDQMKRLRRGFPFWELFTVWIIVLCTALPISSLFPFLYFMIDDFNIAKKEEDIGFYAGFVGCSFMLGRAFTSVAWGLVADRYGRKPVILIGTASVVVFNTLFGLSLNFWMAIITRFCLGSFNGLLGPIKAYAMEIFRDEYQGLALSAVSTAWGIGLIIGPAIGGFLAQPAKQYPSLFSQDSIFGKFPFFLPCLAISVFAFLVTIVSSRIPETLHNHKFNDDESYDALKDLSDDPESNKVAERNGKSSLLNNWPLISSIIVYCVFSLHDMAYTEIFSLWANSPRKYGGLGYSTADVGSVLAFSGFGLLIFQLSLYSYAERLLGPIIVTRISGSLAMVVLSCYPLIAKLSGLALTVTVTSASVAKSVLGTSAITGLFILQNKAVRQDQRGAANGIAMTAMSLFKAIGPAAAGIIFSWSEKRQGAAFLPGTQMVFFILNVVLALGVVLTFKPFLAETQQ.

A run of 12 helical transmembrane segments spans residues 43–63 (IIVL…YFMI), 81–101 (FVGC…GLVA), 108–128 (PVIL…GLSL), 130–150 (FWMA…LGPI), 169–189 (AVST…GFLA), 208–228 (FPFF…TIVS), 280–300 (IIVY…FSLW), 317–337 (VGSV…SLYS), 346–367 (IIVT…PLIA), 378–398 (VTSA…GLFI), 415–435 (IAMT…GIIF), and 453–473 (VFFI…KPFL).

Belongs to the major facilitator superfamily. Predominantly expressed in roots and stomatal guard cells. Detected in anther stamen filaments and shoot apical meristem. In the mature portion of roots, restricted to the cortex. At the root tip, highly expressed in both the cortical and epidermal cell layers of the apical meristem and the transition zone, while absent from the quiescent center or the columella cells. Not detected in lateral root primordia.

The protein resides in the cell membrane. The protein localises to the vacuole membrane. In terms of biological role, major facilitator superfamily (MFS) transporter probably involved in 2,4-dichlorophenoxyacetic acid (2,4-D) export. K(+) may be the physiological substrate of the transporter. Functionally, modulates root auxin-related processes. Involved in auxin efflux and acts as a positive regulator of shootward transport at the root apex. May mediate proton efflux from the vacuolar compartment. Its function is as follows. Mediates drought stress tolerance by regulating stomatal closure. The polypeptide is Protein ZINC INDUCED FACILITATOR-LIKE 1 (ZIFL1) (Arabidopsis thaliana (Mouse-ear cress)).